An 82-amino-acid chain; its full sequence is Vejovine (82 aa).

Positions 1-22 (MNAKTLFVVFLIGMLVTEQVEA) are cleaved as a signal peptide. Positions 70 to 82 (MTLDEIVDAMYYD) are excised as a propeptide.

This sequence belongs to the non-disulfide-bridged peptide (NDBP) superfamily. Long chain multifunctional peptide (group 2) family. As to expression, expressed by the venom gland.

It localises to the secreted. The protein localises to the target cell membrane. Functionally, displays significant potent antimicrobial activity against clinical isolates of Gram-negative multidrug resistant strains of E.coli, P.aeruginosa and A.baumanii with MIC values as low as 4.4 uM. Additionally, it displays low cytolytic and hemolytic activity against human erythrocytes reaching 50% hemolysis at 100 uM. The chain is Vejovine from Vaejovis mexicanus (Mexican scorpion).